The sequence spans 298 residues: Type II methyltransferase M.MjaIV (298 aa).

It carries out the reaction a 2'-deoxyadenosine in DNA + S-adenosyl-L-methionine = an N(6)-methyl-2'-deoxyadenosine in DNA + S-adenosyl-L-homocysteine + H(+). A methylase that recognizes the double-stranded sequence 5'-GTNNAC-3', methylates A-5 on both strands, and protects the DNA from cleavage by the MjaIV endonuclease. The chain is Type II methyltransferase M.MjaIV (mjaIVMP) from Methanocaldococcus jannaschii (strain ATCC 43067 / DSM 2661 / JAL-1 / JCM 10045 / NBRC 100440) (Methanococcus jannaschii).